The following is a 122-amino-acid chain: UPF0102 protein cgR_1859 (122 aa).

The protein belongs to the UPF0102 family.

The protein is UPF0102 protein cgR_1859 of Corynebacterium glutamicum (strain R).